A 115-amino-acid polypeptide reads, in one-letter code: Promotilin (115 aa).

Residues 1–25 form the signal peptide; it reads MVSRKAVAALLVVHAPAMLASQTEA. The segment at 40–74 is disordered; it reads EKERSKGQKKSLSVWQRSGEEGPVDPAEPIEEEGN.

It belongs to the motilin family.

It localises to the secreted. Plays an important role in the regulation of interdigestive gastrointestinal motility and indirectly causes rhythmic contraction of duodenal and colonic smooth muscle. In Macaca mulatta (Rhesus macaque), this protein is Promotilin (MLN).